Reading from the N-terminus, the 120-residue chain is GATA transcription factor 23 (120 aa).

The GATA-type zinc-finger motif lies at 22 to 76 (KGTIRCCSECKTTKTPMWRGGPTGPKSLCNACGIRHRKQRRSELLGIHIIRSHKS).

It belongs to the type IV zinc-finger family. Class B subfamily.

The protein resides in the nucleus. Its function is as follows. Transcriptional regulator that specifically binds 5'-GATA-3' or 5'-GAT-3' motifs within gene promoters. In Arabidopsis thaliana (Mouse-ear cress), this protein is GATA transcription factor 23 (GATA23).